Reading from the N-terminus, the 129-residue chain is uncharacterized protein (129 aa).

The chain crosses the membrane as a helical span at residues 8–24 (YLILFITIIAICSLFRI).

It localises to the membrane. This is an uncharacterized protein from Rickettsia prowazekii (strain Madrid E).